The sequence spans 428 residues: AP2-like ethylene-responsive transcription factor At2g41710 (428 aa).

Polar residues predominate over residues Met-1–Gly-10. Residues Met-1 to Thr-28 are disordered. Positions Ile-70–Pro-136 form a DNA-binding region, AP2/ERF.

It belongs to the AP2/ERF transcription factor family. AP2 subfamily.

Its subcellular location is the nucleus. Functionally, probably acts as a transcriptional activator. Binds to the GCC-box pathogenesis-related promoter element. May be involved in the regulation of gene expression by stress factors and by components of stress signal transduction pathways. This is AP2-like ethylene-responsive transcription factor At2g41710 from Arabidopsis thaliana (Mouse-ear cress).